Consider the following 458-residue polypeptide: GTPase Der (458 aa).

2 EngA-type G domains span residues 4–169 and 178–353; these read PSIA…PKDF and VMMS…TQHR. GTP contacts are provided by residues 10 to 17, 57 to 61, 120 to 123, 184 to 191, 231 to 235, and 296 to 299; these read GRPNVGKS, DTGGL, NKCE, DTAGI, and NKWD. A KH-like domain is found at 354–439; it reads MRVTTSVVNE…PIILLWRGKQ (86 aa).

The protein belongs to the TRAFAC class TrmE-Era-EngA-EngB-Septin-like GTPase superfamily. EngA (Der) GTPase family. In terms of assembly, associates with the 50S ribosomal subunit.

Functionally, GTPase that plays an essential role in the late steps of ribosome biogenesis. The polypeptide is GTPase Der (Prochlorococcus marinus (strain MIT 9515)).